Here is a 347-residue protein sequence, read N- to C-terminus: GMP reductase (347 aa).

108–131 (ADFQKTKDIMALTDDLIFICIDIA) is an NADP(+) binding site. K(+)-binding residues include glycine 181 and glycine 183. The Thioimidate intermediate role is filled by cysteine 186. An NADP(+)-binding site is contributed by 216 to 239 (IIGDGGCSCAGDVSKAFGGGADFV).

Belongs to the IMPDH/GMPR family. GuaC type 1 subfamily. As to quaternary structure, homotetramer.

The enzyme catalyses IMP + NH4(+) + NADP(+) = GMP + NADPH + 2 H(+). Catalyzes the irreversible NADPH-dependent deamination of GMP to IMP. It functions in the conversion of nucleobase, nucleoside and nucleotide derivatives of G to A nucleotides, and in maintaining the intracellular balance of A and G nucleotides. The polypeptide is GMP reductase (Aliivibrio fischeri (strain MJ11) (Vibrio fischeri)).